The following is a 480-amino-acid chain: RNA-splicing ligase RtcB homolog (480 aa).

Mn(2+)-binding residues include aspartate 93, cysteine 96, histidine 202, histidine 234, and histidine 328. Residue 201 to 205 participates in GMP binding; the sequence is NHYTE. GMP-binding positions include 328–329, 377–380, serine 384, 403–406, and lysine 479; these read HN, GGTM, and HGAG. Histidine 403 acts as the GMP-histidine intermediate in catalysis.

It belongs to the RtcB family. As to quaternary structure, catalytic component of the tRNA-splicing ligase complex. The cofactor is Mn(2+).

The enzyme catalyses a 3'-end 3'-phospho-ribonucleotide-RNA + a 5'-end dephospho-ribonucleoside-RNA + GTP = a ribonucleotidyl-ribonucleotide-RNA + GMP + diphosphate. It carries out the reaction a 3'-end 2',3'-cyclophospho-ribonucleotide-RNA + a 5'-end dephospho-ribonucleoside-RNA + GTP + H2O = a ribonucleotidyl-ribonucleotide-RNA + GMP + diphosphate + H(+). In terms of biological role, catalytic subunit of the tRNA-splicing ligase complex that acts by directly joining spliced tRNA halves to mature-sized tRNAs by incorporating the precursor-derived splice junction phosphate into the mature tRNA as a canonical 3',5'-phosphodiester. May act as an RNA ligase with broad substrate specificity, and may function toward other RNAs. This is RNA-splicing ligase RtcB homolog from Thalassiosira pseudonana (Marine diatom).